The following is a 210-amino-acid chain: Ribosomal RNA small subunit methyltransferase G (210 aa).

S-adenosyl-L-methionine contacts are provided by residues Gly77, Phe82, 100-102 (ERS), 128-129 (VE), and Arg141.

It belongs to the methyltransferase superfamily. RNA methyltransferase RsmG family.

The protein localises to the cytoplasm. Specifically methylates the N7 position of a guanine in 16S rRNA. This is Ribosomal RNA small subunit methyltransferase G from Borrelia recurrentis (strain A1).